Here is a 102-residue protein sequence, read N- to C-terminus: MAKMKNPPHPGLMLKVMYLEPLGLNITETAEKLDMPRSALSEIVNAKRAISPEVAVKLEKAFPKHSASFWLRAQAGYALSRVNPHCADKVKPIKTSPLMESV.

In terms of domain architecture, HTH cro/C1-type spans 14-69 (LKVMYLEPLGLNITETAEKLDMPRSALSEIVNAKRAISPEVAVKLEKAFPKHSASF). Positions 25 to 44 (NITETAEKLDMPRSALSEIV) form a DNA-binding region, H-T-H motif.

Belongs to the VapA/VapI family.

This is Virulence-associated protein A (vapA) from Dichelobacter nodosus (Bacteroides nodosus).